The following is a 1485-amino-acid chain: Putative E3 ubiquitin-protein ligase LIN-1 (1485 aa).

Acidic residues predominate over residues Glu-337–Asp-353. 2 disordered regions span residues Glu-337–Pro-363 and Asn-384–Ser-417. Residues Lys-510–Leu-585 form the U-box domain. WD repeat units follow at residues Ser-1204 to Ile-1241, Glu-1246 to Ile-1283, Ser-1409 to Ser-1448, and Gly-1454 to Asp-1485.

As to expression, expressed in roots and nodules, and at very low levels in calli and seedling shoots.

It carries out the reaction S-ubiquitinyl-[E2 ubiquitin-conjugating enzyme]-L-cysteine + [acceptor protein]-L-lysine = [E2 ubiquitin-conjugating enzyme]-L-cysteine + N(6)-ubiquitinyl-[acceptor protein]-L-lysine.. Its pathway is protein modification; protein ubiquitination. Functionally, putative E3 ubiquitin-protein ligase involved in the rhizobial infection process. Plays an important role in the early steps of infection thread formation and in growth and differentiation of nodules. In Lotus japonicus (Lotus corniculatus var. japonicus), this protein is Putative E3 ubiquitin-protein ligase LIN-1.